The following is a 216-amino-acid chain: Uracil-DNA glycosylase (216 aa).

Residue D60 is the Proton acceptor of the active site.

The protein belongs to the uracil-DNA glycosylase (UDG) superfamily. UNG family.

The protein localises to the cytoplasm. The catalysed reaction is Hydrolyzes single-stranded DNA or mismatched double-stranded DNA and polynucleotides, releasing free uracil.. Functionally, excises uracil residues from the DNA which can arise as a result of misincorporation of dUMP residues by DNA polymerase or due to deamination of cytosine. The polypeptide is Uracil-DNA glycosylase (Psychromonas ingrahamii (strain DSM 17664 / CCUG 51855 / 37)).